The primary structure comprises 246 residues: tRNA pseudouridine synthase A (246 aa).

D53 acts as the Nucleophile in catalysis. A substrate-binding site is contributed by Y112.

It belongs to the tRNA pseudouridine synthase TruA family. In terms of assembly, homodimer.

The enzyme catalyses uridine(38/39/40) in tRNA = pseudouridine(38/39/40) in tRNA. Its function is as follows. Formation of pseudouridine at positions 38, 39 and 40 in the anticodon stem and loop of transfer RNAs. The sequence is that of tRNA pseudouridine synthase A from Anaplasma phagocytophilum (strain HZ).